A 203-amino-acid chain; its full sequence is Chaperonin-like RbcX protein 2, chloroplastic (203 aa).

The transit peptide at 1-78 directs the protein to the chloroplast; the sequence is MVSAWFVVGS…RKSKKLLIVN (78 aa).

It belongs to the RbcX family. Homodimer. Interacts with rbcL, atpB and RBCS-1B.

The protein resides in the plastid. Its subcellular location is the chloroplast stroma. Functionally, chaperone involved in RuBisCO assembly process. The sequence is that of Chaperonin-like RbcX protein 2, chloroplastic from Arabidopsis thaliana (Mouse-ear cress).